The following is a 317-amino-acid chain: Transcription factor EC (317 aa).

Residues 1–44 (MTLDHQILNQSFKRSHPPTPSSELLVQHGHPSPESDTGLTGNPL) form a disordered region. The tract at residues 1-90 (MTLDHQILNQ…GLTSASCPSS (90 aa)) is necessary for transcriptional transactivation. The span at 34–43 (ESDTGLTGNP) shows a compositional bias: polar residues. In terms of domain architecture, bHLH spans 110–163 (QKKDNHNLIERRRRYNINYRIKELGTLIPKSNDPDMRWNKGTILKASVEYIKWL). A necessary for transcriptional transactivation region spans residues 241-317 (TSPELCDQAM…SFSSEDGDEL (77 aa)). The tract at residues 297–317 (PAVSKESSRRSSFSSEDGDEL) is disordered.

Belongs to the MiT/TFE family. In terms of assembly, homodimer. Forms heterodimers with MITF and TFE3. Interacts with MITF.

The protein localises to the nucleus. In terms of biological role, transcriptional regulator that acts as a repressor or an activator. Acts as a transcriptional repressor on minimal promoter containing element F (that includes an E-box sequence). Binds to element F in an E-box sequence-specific manner. Acts as a transcriptional transactivator on the proximal promoter region of the tartrate-resistant acid phosphatase (TRAP) E-box containing promoter. Collaborates with MITF in target gene activation. Acts as a transcriptional repressor on minimal promoter containing mu E3 enhancer sequence. Binds to mu E3 DNA sequence of the immunoglobulin heavy-chain gene enhancer. Binds DNA in a homo- or heterodimeric form. The sequence is that of Transcription factor EC (TFEC) from Bos taurus (Bovine).